The sequence spans 347 residues: Dihydroorotase (347 aa).

His14 and His16 together coordinate Zn(2+). Residues 16–18 (HLR) and Asn42 contribute to the substrate site. Zn(2+) contacts are provided by Lys100, His137, and His175. Lys100 is modified (N6-carboxylysine). His137 contributes to the substrate binding site. Leu220 lines the substrate pocket. Residue Asp248 participates in Zn(2+) binding. Residue Asp248 is part of the active site. Positions 252 and 264 each coordinate substrate.

It belongs to the metallo-dependent hydrolases superfamily. DHOase family. Class II DHOase subfamily. As to quaternary structure, homodimer. Zn(2+) serves as cofactor.

It carries out the reaction (S)-dihydroorotate + H2O = N-carbamoyl-L-aspartate + H(+). It functions in the pathway pyrimidine metabolism; UMP biosynthesis via de novo pathway; (S)-dihydroorotate from bicarbonate: step 3/3. Catalyzes the reversible cyclization of carbamoyl aspartate to dihydroorotate. In Pseudomonas syringae pv. tomato (strain ATCC BAA-871 / DC3000), this protein is Dihydroorotase.